Here is a 319-residue protein sequence, read N- to C-terminus: Tyrosine--tRNA ligase (319 aa).

Y40 contributes to the L-tyrosine binding site. The 'HIGH' region signature appears at 45 to 53 (PSGRIHMGH). L-tyrosine is bound by residues Y159, Q163, D166, and Q181. A 'KMSKS' region motif is present at residues 216–220 (KMSSS). S219 lines the ATP pocket.

Belongs to the class-I aminoacyl-tRNA synthetase family. TyrS type 3 subfamily. As to quaternary structure, homodimer.

Its subcellular location is the cytoplasm. It carries out the reaction tRNA(Tyr) + L-tyrosine + ATP = L-tyrosyl-tRNA(Tyr) + AMP + diphosphate + H(+). Functionally, catalyzes the attachment of tyrosine to tRNA(Tyr) in a two-step reaction: tyrosine is first activated by ATP to form Tyr-AMP and then transferred to the acceptor end of tRNA(Tyr). This Methanococcus maripaludis (strain DSM 14266 / JCM 13030 / NBRC 101832 / S2 / LL) protein is Tyrosine--tRNA ligase.